Reading from the N-terminus, the 515-residue chain is Putative ammonium transporter 2 (515 aa).

12 helical membrane-spanning segments follow: residues 34 to 54 (GVWM…FGLL), 72 to 92 (VFDV…LTFG), 124 to 144 (GISY…STIV), 156 to 176 (SHCF…HWVW), 191 to 211 (AGCS…TLYL), 226 to 246 (VSDP…WLAF), 266 to 286 (AVGT…ITRL), 291 to 311 (IQMD…TGGC), 321 to 337 (LVGA…YPVT), 346 to 366 (VGVF…PAIF), 381 to 401 (FQTS…LLFL), and 404 to 424 (FVIL…LFLI).

This sequence belongs to the ammonia transporter channel (TC 1.A.11.2) family.

It is found in the membrane. Involved in the uptake of ammonia. Implicated in aging. In Caenorhabditis elegans, this protein is Putative ammonium transporter 2 (amt-2).